The following is a 478-amino-acid chain: Trigger factor (478 aa).

A compositionally biased stretch (basic and acidic residues) spans 154–167 (MAKDSRSFEPREEG). 2 disordered regions span residues 154 to 173 (MAKDSRSFEPREEGAEAQSG) and 441 to 478 (KEALFAEDDEADAVTGGAATDEKPSESNNEAAADKAAG). Residues 173–258 (GDRVTIDFVG…VKAVAAPGET (86 aa)) form the PPIase FKBP-type domain.

The protein belongs to the FKBP-type PPIase family. Tig subfamily.

Its subcellular location is the cytoplasm. It catalyses the reaction [protein]-peptidylproline (omega=180) = [protein]-peptidylproline (omega=0). Functionally, involved in protein export. Acts as a chaperone by maintaining the newly synthesized protein in an open conformation. Functions as a peptidyl-prolyl cis-trans isomerase. This is Trigger factor from Methylorubrum extorquens (strain CM4 / NCIMB 13688) (Methylobacterium extorquens).